Here is a 189-residue protein sequence, read N- to C-terminus: Peptidyl-tRNA hydrolase (189 aa).

Histidine 15 is a binding site for tRNA. Histidine 20 acts as the Proton acceptor in catalysis. TRNA contacts are provided by phenylalanine 66, asparagine 68, and asparagine 114.

The protein belongs to the PTH family. In terms of assembly, monomer.

The protein resides in the cytoplasm. It carries out the reaction an N-acyl-L-alpha-aminoacyl-tRNA + H2O = an N-acyl-L-amino acid + a tRNA + H(+). In terms of biological role, hydrolyzes ribosome-free peptidyl-tRNAs (with 1 or more amino acids incorporated), which drop off the ribosome during protein synthesis, or as a result of ribosome stalling. Its function is as follows. Catalyzes the release of premature peptidyl moieties from peptidyl-tRNA molecules trapped in stalled 50S ribosomal subunits, and thus maintains levels of free tRNAs and 50S ribosomes. The chain is Peptidyl-tRNA hydrolase from Streptococcus equi subsp. equi (strain 4047).